The chain runs to 282 residues: 4-diphosphocytidyl-2-C-methyl-D-erythritol kinase (282 aa).

Residue lysine 11 is part of the active site. Residue 93-103 (LVSAGLAGGSA) coordinates ATP. Residue aspartate 133 is part of the active site.

The protein belongs to the GHMP kinase family. IspE subfamily.

It carries out the reaction 4-CDP-2-C-methyl-D-erythritol + ATP = 4-CDP-2-C-methyl-D-erythritol 2-phosphate + ADP + H(+). It functions in the pathway isoprenoid biosynthesis; isopentenyl diphosphate biosynthesis via DXP pathway; isopentenyl diphosphate from 1-deoxy-D-xylulose 5-phosphate: step 3/6. Functionally, catalyzes the phosphorylation of the position 2 hydroxy group of 4-diphosphocytidyl-2C-methyl-D-erythritol. This Ehrlichia canis (strain Jake) protein is 4-diphosphocytidyl-2-C-methyl-D-erythritol kinase.